The following is a 316-amino-acid chain: tRNA dimethylallyltransferase (316 aa).

17–24 (GPTASGKT) contacts ATP. 19–24 (TASGKT) contributes to the substrate binding site. Interaction with substrate tRNA regions lie at residues 42 to 45 (DSAL), 166 to 170 (QRLSR), 247 to 252 (RCVGYR), and 280 to 287 (KRQITWLR).

The protein belongs to the IPP transferase family. In terms of assembly, monomer. It depends on Mg(2+) as a cofactor.

The enzyme catalyses adenosine(37) in tRNA + dimethylallyl diphosphate = N(6)-dimethylallyladenosine(37) in tRNA + diphosphate. In terms of biological role, catalyzes the transfer of a dimethylallyl group onto the adenine at position 37 in tRNAs that read codons beginning with uridine, leading to the formation of N6-(dimethylallyl)adenosine (i(6)A). The sequence is that of tRNA dimethylallyltransferase from Escherichia coli O81 (strain ED1a).